We begin with the raw amino-acid sequence, 252 residues long: Imidazole glycerol phosphate synthase subunit HisF (252 aa).

Active-site residues include Asp-11 and Asp-130.

Belongs to the HisA/HisF family. Heterodimer of HisH and HisF.

The protein localises to the cytoplasm. The catalysed reaction is 5-[(5-phospho-1-deoxy-D-ribulos-1-ylimino)methylamino]-1-(5-phospho-beta-D-ribosyl)imidazole-4-carboxamide + L-glutamine = D-erythro-1-(imidazol-4-yl)glycerol 3-phosphate + 5-amino-1-(5-phospho-beta-D-ribosyl)imidazole-4-carboxamide + L-glutamate + H(+). Its pathway is amino-acid biosynthesis; L-histidine biosynthesis; L-histidine from 5-phospho-alpha-D-ribose 1-diphosphate: step 5/9. In terms of biological role, IGPS catalyzes the conversion of PRFAR and glutamine to IGP, AICAR and glutamate. The HisF subunit catalyzes the cyclization activity that produces IGP and AICAR from PRFAR using the ammonia provided by the HisH subunit. This is Imidazole glycerol phosphate synthase subunit HisF from Anoxybacillus flavithermus (strain DSM 21510 / WK1).